An 88-amino-acid chain; its full sequence is uncharacterized protein (88 aa).

This is an uncharacterized protein from Escherichia coli O157:H7.